The sequence spans 459 residues: Elongation factor 1-alpha 1 (459 aa).

Residues 5–242 (KTHINIVVIG…DCIIPPQRPT (238 aa)) enclose the tr-type G domain. The tract at residues 14–21 (GHVDSGKS) is G1. The interval 70–74 (GITID) is G2. The segment at 91–94 (DAPG) is G3. The G4 stretch occupies residues 153–156 (NKMD). The segment at 194–196 (SGF) is G5. Residues glutamate 301 and glutamate 374 each carry the 5-glutamyl glycerylphosphorylethanolamine modification.

It belongs to the TRAFAC class translation factor GTPase superfamily. Classic translation factor GTPase family. EF-Tu/EF-1A subfamily.

It localises to the cytoplasm. Its function is as follows. This protein promotes the GTP-dependent binding of aminoacyl-tRNA to the A-site of ribosomes during protein biosynthesis. This is Elongation factor 1-alpha 1 (eft-1) from Oscheius tipulae.